The following is a 481-amino-acid chain: Cysteine--tRNA ligase (481 aa).

Residue C29 participates in Zn(2+) binding. Residues 31–41 carry the 'HIGH' region motif; that stretch reads PTTYDYIHLGN. Zn(2+) contacts are provided by C209, H234, and E238. Residues 267–271 carry the 'KMSKS' region motif; it reads KMSKS. K270 is a binding site for ATP.

The protein belongs to the class-I aminoacyl-tRNA synthetase family. As to quaternary structure, monomer. Requires Zn(2+) as cofactor.

Its subcellular location is the cytoplasm. The catalysed reaction is tRNA(Cys) + L-cysteine + ATP = L-cysteinyl-tRNA(Cys) + AMP + diphosphate. The chain is Cysteine--tRNA ligase from Heliobacterium modesticaldum (strain ATCC 51547 / Ice1).